Consider the following 530-residue polypeptide: Bifunctional purine biosynthesis protein PurH (530 aa).

An MGS-like domain is found at 1-148 (MNNARPIRRA…KNHKDVTIVV (148 aa)).

It belongs to the PurH family.

The catalysed reaction is (6R)-10-formyltetrahydrofolate + 5-amino-1-(5-phospho-beta-D-ribosyl)imidazole-4-carboxamide = 5-formamido-1-(5-phospho-D-ribosyl)imidazole-4-carboxamide + (6S)-5,6,7,8-tetrahydrofolate. The enzyme catalyses IMP + H2O = 5-formamido-1-(5-phospho-D-ribosyl)imidazole-4-carboxamide. The protein operates within purine metabolism; IMP biosynthesis via de novo pathway; 5-formamido-1-(5-phospho-D-ribosyl)imidazole-4-carboxamide from 5-amino-1-(5-phospho-D-ribosyl)imidazole-4-carboxamide (10-formyl THF route): step 1/1. It functions in the pathway purine metabolism; IMP biosynthesis via de novo pathway; IMP from 5-formamido-1-(5-phospho-D-ribosyl)imidazole-4-carboxamide: step 1/1. This is Bifunctional purine biosynthesis protein PurH from Vibrio parahaemolyticus serotype O3:K6 (strain RIMD 2210633).